Here is a 198-residue protein sequence, read N- to C-terminus: MKKLYLASGSPRRRELLTQIGIPFTAISADIDETPLANESPLAYVERLARGKAEAGRRIVTSEPPFCVLGADTAVVLDGKILGKPVDEADACAMLMMLSGKEHEVLTAIAVLDGERCESRVVRSLVRFRSISREEAAAYWASGEPRDKAGGYGIQGLGAVFVAGLNGSYSAVVGLPVCESAELLGHFGIPCWQTLNAQ.

Catalysis depends on D72, which acts as the Proton acceptor.

The protein belongs to the Maf family. YhdE subfamily. A divalent metal cation serves as cofactor.

It is found in the cytoplasm. It catalyses the reaction dTTP + H2O = dTMP + diphosphate + H(+). The catalysed reaction is UTP + H2O = UMP + diphosphate + H(+). Its function is as follows. Nucleoside triphosphate pyrophosphatase that hydrolyzes dTTP and UTP. May have a dual role in cell division arrest and in preventing the incorporation of modified nucleotides into cellular nucleic acids. The sequence is that of dTTP/UTP pyrophosphatase from Pseudomonas fluorescens (strain Pf0-1).